A 28-amino-acid polypeptide reads, in one-letter code: NU-theraphotoxin-Preg1a (28 aa).

Disulfide bonds link Cys2–Cys19, Cys9–Cys22, and Cys18–Cys27.

Expressed by the venom gland.

The protein resides in the secreted. Functionally, toxin that acts as an agonist on melanocortin receptors (MC1R, MC3R, MC5R, MC5R). After binding to MC1R, the peptide activates the hMC1R/Gs pathway, but after binding to MC4R, it is not able to activate or antagonize the MC4R/Gs pathway. Inhibits melanocyte stimulating hormone (MSH)-binding to human receptors (Ki=1.8 uM to MC1R, Ki=19.8 uM to MC3R, Ki=7.1 uM to MC4R, Ki=10.0 uM to MC5R). This toxin is structurally unrelated to the natural agonists. This Poecilotheria regalis (Indian ornamental tree spider) protein is NU-theraphotoxin-Preg1a.